The primary structure comprises 589 residues: Peroxisomal biogenesis factor 8 (589 aa).

The short motif at 587 to 589 (SKL) is the Microbody targeting signal element.

Its subcellular location is the peroxisome matrix. Its function is as follows. Required for peroxisome assembly. The sequence is that of Peroxisomal biogenesis factor 8 (PEX8) from Saccharomyces cerevisiae (strain ATCC 204508 / S288c) (Baker's yeast).